The chain runs to 146 residues: 3-hydroxyacyl-[acyl-carrier-protein] dehydratase FabZ (146 aa).

His-49 is a catalytic residue.

It belongs to the thioester dehydratase family. FabZ subfamily.

Its subcellular location is the cytoplasm. It catalyses the reaction a (3R)-hydroxyacyl-[ACP] = a (2E)-enoyl-[ACP] + H2O. Its function is as follows. Involved in unsaturated fatty acids biosynthesis. Catalyzes the dehydration of short chain beta-hydroxyacyl-ACPs and long chain saturated and unsaturated beta-hydroxyacyl-ACPs. This Pseudomonas aeruginosa (strain LESB58) protein is 3-hydroxyacyl-[acyl-carrier-protein] dehydratase FabZ.